The chain runs to 347 residues: Calcium homeostasis modulator protein 3 (347 aa).

Residues 1 to 20 (MDRFRMLFQHLQSSSESVMN) are Cytoplasmic-facing. Residues 9–36 (QHLQSSSESVMNGICLLLAAVTVKIYSS) form a central pore region. The helical transmembrane segment at 21 to 36 (GICLLLAAVTVKIYSS) threads the bilayer. Topologically, residues 37–48 (LDFNCPCLERYN) are extracellular. Cystine bridges form between C41-C126 and C43-C157. The chain crosses the membrane as a helical span at residues 49–71 (ALYGLGLLLTPPLALFLCGLLVN). At 72–98 (RQSVLMVEEWRRPAGHRRKDLGIIRYM) the chain is on the cytoplasmic side. C99 is lipidated: S-palmitoyl cysteine. Residues 99–124 (CSSVLQRALAAPLVWILLALLDGKCF) traverse the membrane as a helical segment. Over 125–176 (VCAFSNSVDPEKFLDFANMTPRQVQLFLAKVPCKEDELVKNSPARKAVSRYL) the chain is Extracellular. The N-linked (GlcNAc...) asparagine glycan is linked to N142. Residues 177–202 (RCLSQAIGWSITLLVIVVAFLARCLR) form a helical membrane-spanning segment. S-palmitoyl cysteine attachment occurs at residues C200 and C204. Residues 203-347 (PCFDQTVFLQ…GTKLCHQLNV (145 aa)) lie on the Cytoplasmic side of the membrane. The tract at residues 265 to 290 (GGIPESQESSEPPELREDRDSGNGKA) is disordered. Over residues 277 to 286 (PELREDRDSG) the composition is skewed to basic and acidic residues.

This sequence belongs to the CALHM family. As to quaternary structure, associates with CALHM1 as a pore-forming subunit in a hetero-hexameric channel complex. Post-translationally, N-glycosylated. In terms of processing, palmitoylated by ZDHHC3 and ZDHHC15. Palmitoylation positively regulates CALHM1:CALHM3 channel conductance. As to expression, expressed in taste bud cells.

It is found in the basolateral cell membrane. The enzyme catalyses ATP(in) = ATP(out). It carries out the reaction Ca(2+)(in) = Ca(2+)(out). It catalyses the reaction Na(+)(in) = Na(+)(out). The catalysed reaction is K(+)(in) = K(+)(out). The enzyme catalyses chloride(in) = chloride(out). Its function is as follows. Pore-forming subunit of gustatory voltage-gated ion channels required for sensory perception of sweet, bitter and umami tastes. With CALHM1 forms a fast-activating voltage-gated ATP-release channel in type II taste bud cells, ATP acting as a neurotransmitter to activate afferent neural gustatory pathways. Acts both as a voltage-gated and calcium-activated ion channel: mediates neuronal excitability in response to membrane depolarization and low extracellular Ca(2+) concentration. Has poor ion selectivity and forms a wide pore (around 14 Angstroms) that mediates permeation of small ions including Ca(2+), Na(+), K(+) and Cl(-), as well as larger ions such as ATP(4-). This Mus musculus (Mouse) protein is Calcium homeostasis modulator protein 3.